Here is a 513-residue protein sequence, read N- to C-terminus: GMP synthase [glutamine-hydrolyzing] (513 aa).

The Glutamine amidotransferase type-1 domain maps to 9–198 (LILVLDFGSQ…VRRVCNCTGE (190 aa)). The active-site Nucleophile is the Cys86. Active-site residues include His172 and Glu174. Residues 199-388 (WTMENFIEIE…LGIPEHLVWR (190 aa)) form the GMPS ATP-PPase domain. 226–232 (SGGVDSS) contacts ATP.

In terms of assembly, homodimer.

It carries out the reaction XMP + L-glutamine + ATP + H2O = GMP + L-glutamate + AMP + diphosphate + 2 H(+). It functions in the pathway purine metabolism; GMP biosynthesis; GMP from XMP (L-Gln route): step 1/1. Its function is as follows. Catalyzes the synthesis of GMP from XMP. The protein is GMP synthase [glutamine-hydrolyzing] of Staphylococcus epidermidis (strain ATCC 12228 / FDA PCI 1200).